Here is a 446-residue protein sequence, read N- to C-terminus: Exodeoxyribonuclease 7 large subunit (446 aa).

The protein belongs to the XseA family. Heterooligomer composed of large and small subunits.

The protein localises to the cytoplasm. It catalyses the reaction Exonucleolytic cleavage in either 5'- to 3'- or 3'- to 5'-direction to yield nucleoside 5'-phosphates.. In terms of biological role, bidirectionally degrades single-stranded DNA into large acid-insoluble oligonucleotides, which are then degraded further into small acid-soluble oligonucleotides. The polypeptide is Exodeoxyribonuclease 7 large subunit (Geotalea uraniireducens (strain Rf4) (Geobacter uraniireducens)).